We begin with the raw amino-acid sequence, 424 residues long: Deoxyguanosinetriphosphate triphosphohydrolase-like protein (424 aa).

The interval 1–24 (MYPYSDADAFRRHPERAKSSQLRT) is disordered. Positions 8–18 (DAFRRHPERAK) are enriched in basic and acidic residues. Positions 67–217 (RLTHSLEVAQ…MDFSDDIAYS (151 aa)) constitute an HD domain.

The protein belongs to the dGTPase family. Type 2 subfamily.

This Corynebacterium glutamicum (strain R) protein is Deoxyguanosinetriphosphate triphosphohydrolase-like protein.